Reading from the N-terminus, the 292-residue chain is MQKSGIFILNKPKNISTYQLINQVKKKLNIKKVGHCGTLDLLATGVVICLVNNATKISDYLLNANKAYQVKIKLFTLTDSYDGEGNIIQTQIPFDISLDQINKVISKYNNYSYEQYPPIYSSIKVNGKKLYQYALANQDVEIKSRKVTIFKTKLLNYDQKNYEIFLDVKCSKGTYIRSLAIDICKDLNTIGYVVELNRTLSGNFDINSAIDIKDLSWKHLTSIYDAVKINDFKVVKYHNILDVKQGKKIVLNNIKDQLVFISDEQNNILAVYQKYENNIFKVKRGGLNNDIY.

The active-site Nucleophile is Asp-40.

Belongs to the pseudouridine synthase TruB family. Type 1 subfamily.

It catalyses the reaction uridine(55) in tRNA = pseudouridine(55) in tRNA. Responsible for synthesis of pseudouridine from uracil-55 in the psi GC loop of transfer RNAs. The polypeptide is tRNA pseudouridine synthase B (Mycoplasma capricolum subsp. capricolum (strain California kid / ATCC 27343 / NCTC 10154)).